The following is a 629-amino-acid chain: tRNA uridine 5-carboxymethylaminomethyl modification enzyme MnmG (629 aa).

11-16 (GGGHAG) contacts FAD. An NAD(+)-binding site is contributed by 273 to 287 (GPRYCPSFEDKVVRF).

It belongs to the MnmG family. Homodimer. Heterotetramer of two MnmE and two MnmG subunits. FAD serves as cofactor.

It localises to the cytoplasm. NAD-binding protein involved in the addition of a carboxymethylaminomethyl (cmnm) group at the wobble position (U34) of certain tRNAs, forming tRNA-cmnm(5)s(2)U34. This is tRNA uridine 5-carboxymethylaminomethyl modification enzyme MnmG from Mycoplasma capricolum subsp. capricolum (strain California kid / ATCC 27343 / NCTC 10154).